Reading from the N-terminus, the 652-residue chain is MALFTINRYLGEEEEEDSEKQSRSKALLAKLQKQVKARGQQSVSNTPKEEEEQQDDKEHKKRKHKLQETKGKIKKSESVQNTDPTEEADSSVKKKKKRKKSLSTEDVIVKIEENESENEKSVDITGPTPSSPVQFKAEKAEELTSSSQSNYQVLGGFKEKDVQKVKRVLPQWLSQPDVIQKDIKSNLIPISEVPGICPTLLRKLQTNGIQSFFPVQAEVIPAILESVGSGLLVGPGGYRPRDVCVSAPTGSGKTLAFVIPVVQALSKRVVRQVRALAVLPTKELAQQVSNVFSAYTEGSSLKVVMITGQKSFAAEQTALSEIRGGVSHSMADIVVATPGRLVDHINKNSSFSLQHLRFLIIDEADRMIDSMHQSWLSQVTKAVYSTPGETHTSVFRRTVPGPITAASLSPPQIPLQKLLFSATLTQNPEKLQLLDLHQPRLFSSTHSLTDNPAQSQDTFHFPQGLSEYYVPCTFSKKPLIILHFLLRLKFSPALCFTNSREGAHRLYLLVKLFGGVEVAEFSSKLSPGERQKTLKDFEKGKIPLLISTDAAARGIDINGVKCVINYDAPQYIRTYIHRVGRTARAGKAGLAFTFLLKVQEKRFLKMVSDAGSPGIQKQHVHPEALKSMESRYEQVLAELGTIVKEENEKKRF.

Residues 1–145 (MALFTINRYL…KAEKAEELTS (145 aa)) are disordered. Residues 25–34 (KALLAKLQKQ) show a composition bias toward low complexity. 2 stretches are compositionally biased toward basic and acidic residues: residues 66 to 77 (LQETKGKIKKSE) and 107 to 122 (VIVK…EKSV). The Q motif motif lies at 212-220 (FFPVQAEVI). Positions 234 to 442 (GPGGYRPRDV…LLDLHQPRLF (209 aa)) constitute a Helicase ATP-binding domain. 247-254 (APTGSGKT) is an ATP binding site. Positions 362–365 (DEAD) match the DEAD box motif. Residues 480 to 626 (IILHFLLRLK…KQHVHPEALK (147 aa)) form the Helicase C-terminal domain.

This sequence belongs to the DEAD box helicase family. DDX51/DBP6 subfamily.

Its subcellular location is the nucleus. The protein localises to the nucleolus. The catalysed reaction is ATP + H2O = ADP + phosphate + H(+). Functionally, ATP-binding RNA helicase involved in the biogenesis of 60S ribosomal subunits. The protein is ATP-dependent RNA helicase DDX51 (ddx51) of Danio rerio (Zebrafish).